Reading from the N-terminus, the 1109-residue chain is Pesticidal crystal protein Cry28Aa (1109 aa).

It belongs to the delta endotoxin family.

Promotes colloidosmotic lysis by binding to the midgut epithelial cells of insects. This chain is Pesticidal crystal protein Cry28Aa (cry28Aa), found in Bacillus thuringiensis subsp. finitimus.